The chain runs to 278 residues: tRNA(Phe) (4-demethylwyosine(37)-C(7)) aminocarboxypropyltransferase (278 aa).

Residues S109, R116, E155, and 183 to 184 (DN) contribute to the S-adenosyl-L-methionine site.

The protein belongs to the class I-like SAM-binding methyltransferase superfamily. TRM5/TYW2 family.

It is found in the cytoplasm. It catalyses the reaction 4-demethylwyosine(37) in tRNA(Phe) + S-adenosyl-L-methionine = 4-demethyl-7-[(3S)-3-amino-3-carboxypropyl]wyosine(37) in tRNA(Phe) + S-methyl-5'-thioadenosine + H(+). In terms of biological role, S-adenosyl-L-methionine-dependent transferase that acts as a component of the wyosine derivatives biosynthesis pathway. Catalyzes the transfer of the alpha-amino-alpha-carboxypropyl (acp) group from S-adenosyl-L-methionine to 4-demethylwyosine (imG-14), forming 7-aminocarboxypropyl-demethylwyosine (wybutosine-86) at position 37 of tRNA(Phe). The chain is tRNA(Phe) (4-demethylwyosine(37)-C(7)) aminocarboxypropyltransferase from Pyrococcus horikoshii (strain ATCC 700860 / DSM 12428 / JCM 9974 / NBRC 100139 / OT-3).